Reading from the N-terminus, the 212-residue chain is Ribosomal RNA small subunit methyltransferase G (212 aa).

S-adenosyl-L-methionine is bound by residues glycine 80, leucine 85, 131–132 (AE), and arginine 146.

This sequence belongs to the methyltransferase superfamily. RNA methyltransferase RsmG family.

It is found in the cytoplasm. The enzyme catalyses guanosine(527) in 16S rRNA + S-adenosyl-L-methionine = N(7)-methylguanosine(527) in 16S rRNA + S-adenosyl-L-homocysteine. Specifically methylates the N7 position of guanine in position 527 of 16S rRNA. The chain is Ribosomal RNA small subunit methyltransferase G from Stenotrophomonas maltophilia (strain R551-3).